The sequence spans 318 residues: Homoserine kinase (318 aa).

ATP is bound at residue 97–107 (PIGSGLGSSAC).

Belongs to the GHMP kinase family. Homoserine kinase subfamily.

It localises to the cytoplasm. The catalysed reaction is L-homoserine + ATP = O-phospho-L-homoserine + ADP + H(+). The protein operates within amino-acid biosynthesis; L-threonine biosynthesis; L-threonine from L-aspartate: step 4/5. Its function is as follows. Catalyzes the ATP-dependent phosphorylation of L-homoserine to L-homoserine phosphate. The sequence is that of Homoserine kinase from Vibrio cholerae serotype O1 (strain ATCC 39541 / Classical Ogawa 395 / O395).